The sequence spans 633 residues: MPDVKKFEAGTYDVIVVGAGHAGCEAALAAARMGQKTLLLTISLEMLAFMPCNPSLGGPAKGIVVREIDALGGEMGKNIDRTYIQMRMLNTGKGPAVRALRAQADKAAYHRSMKHVIENTPNLDLRQGLATEVLVENGQAVGIVAATGAMYRAKSVVLTAGTSSRGKIIIGELMYSSGPNNSLPSIKLSENLEQLGFKLRRFKTGTPPRVNGNTIDFDKTEEQPGDKTPNHFSFTTPDSVYLKDQLSCWMTYTNATTHQIIRDNLDRAPMFSGVIKGVGPRYCPSIEDKIVRFADKPRHQLFLEPEGRDTSEYYVGDFSTSMPEEIQLKMLHSVAGLEHAELMRAGYAIEYDVIEPWQLKATLETKVVDNLFTAGQMNGTSGYEEAAGQGIMAGINAALRAQGKGPFTLKRSDAYIGVMIDDLVTKGTNEPYRLLTSRAEYRLLLRHDNADLRLKPMGHELGLISDERYAEFLAKRQAIETELNRLNTTRLKPKDVNPWLEAHHYAPLKDGVLASDFLKRPEIDYQTMAQFLPDNPTLDHRVIEQVEIQIKYAGYIAKEEASVAKLKRLEGKKIPLRINYAAINGLATEARQKLVKIQPETIAQASRISGVNPADVAILSVYIEQGRISKVAQ.

Residue 18-23 coordinates FAD; it reads GAGHAG. The tract at residues 208–232 is disordered; sequence PRVNGNTIDFDKTEEQPGDKTPNHF. The span at 216–229 shows a compositional bias: basic and acidic residues; it reads DFDKTEEQPGDKTP. 279 to 293 contributes to the NAD(+) binding site; the sequence is GPRYCPSIEDKIVRF.

It belongs to the MnmG family. As to quaternary structure, homodimer. Heterotetramer of two MnmE and two MnmG subunits. FAD is required as a cofactor.

The protein localises to the cytoplasm. Its function is as follows. NAD-binding protein involved in the addition of a carboxymethylaminomethyl (cmnm) group at the wobble position (U34) of certain tRNAs, forming tRNA-cmnm(5)s(2)U34. The protein is tRNA uridine 5-carboxymethylaminomethyl modification enzyme MnmG of Lacticaseibacillus paracasei (strain ATCC 334 / BCRC 17002 / CCUG 31169 / CIP 107868 / KCTC 3260 / NRRL B-441) (Lactobacillus paracasei).